Here is a 298-residue protein sequence, read N- to C-terminus: Trimeric intracellular cation channel type A (298 aa).

Residues 1 to 18 are Lumenal-facing; sequence MDLMSALSLGELALSFSR. Residues 19–39 traverse the membrane as a helical segment; the sequence is VPLFPVFDLSYFIVSIIYLKY. Residues 40–51 lie on the Cytoplasmic side of the membrane; it reads EPGAVELSRRHP. The helical transmembrane segment at 52-72 threads the bilayer; the sequence is VASWLCAMLHCFGSYILADLL. Topologically, residues 73-85 are lumenal; sequence LGEPIIDYFSNSS. Glycine 74 is a Ca(2+) binding site. Residues 86–106 form a helical membrane-spanning segment; sequence SILLASGVWYLIFFCPLDLFY. Topologically, residues 107-144 are cytoplasmic; the sequence is KCVCFLPVKLIFVAMKEVVRVRKIAVGIHHAHHHYHHG. Residues lysine 122 and arginine 126 each contribute to the a 1,2-diacyl-sn-glycero-3-phospho-(1D-myo-inositol-4,5-bisphosphate) site. The helical transmembrane segment at 145 to 165 threads the bilayer; it reads WFIMIATGWVKGSGVALLSNV. The Lumenal portion of the chain corresponds to 166-178; that stretch reads EQLLRGVWKPETN. A helical transmembrane segment spans residues 179-199; sequence EILHMSFPTKASLYGAILFTL. Over 200 to 209 the chain is Cytoplasmic; that stretch reads QQTRWLPVSK. A helical transmembrane segment spans residues 210-230; it reads ASLIFVFTMFMVSCKVFLTAT. At 231–234 the chain is on the lumenal side; sequence HSHS. Residues 235–255 traverse the membrane as a helical segment; the sequence is SPFDILEGYICPVLFGATWGG. Topologically, residues 256–298 are cytoplasmic; sequence DHHHDNHGAPHGMGLGTQHSGLPAKAKEELGEGSRKKKTKKAD. The segment at 260 to 298 is disordered; that stretch reads DNHGAPHGMGLGTQHSGLPAKAKEELGEGSRKKKTKKAD. The span at 280–289 shows a compositional bias: basic and acidic residues; it reads KAKEELGEGS.

The protein belongs to the TMEM38 family. As to quaternary structure, homotrimer; conformation seems to be controled by binding to diacylglycerol (DAG). As to expression, expressed at high levels in heart and striated muscle. Also detected in brain, lung and kidney.

Its subcellular location is the sarcoplasmic reticulum membrane. It is found in the nucleus membrane. The catalysed reaction is K(+)(in) = K(+)(out). Channel activity is activated by a change of voltage within the sarcoplasmic reticulum lumen and blocked by luminal high Ca(2+) levels. In terms of biological role, intracellular monovalent cation channel required for maintenance of rapid intracellular calcium release. Acts as a potassium counter-ion channel that functions in synchronization with calcium release from intracellular stores. Opened by a change of voltage within the sarcoplasmic reticulum lumen. This is Trimeric intracellular cation channel type A (Tmem38a) from Mus musculus (Mouse).